The chain runs to 252 residues: Aspartate/glutamate leucyltransferase (252 aa).

The protein belongs to the R-transferase family. Bpt subfamily.

Its subcellular location is the cytoplasm. The enzyme catalyses N-terminal L-glutamyl-[protein] + L-leucyl-tRNA(Leu) = N-terminal L-leucyl-L-glutamyl-[protein] + tRNA(Leu) + H(+). The catalysed reaction is N-terminal L-aspartyl-[protein] + L-leucyl-tRNA(Leu) = N-terminal L-leucyl-L-aspartyl-[protein] + tRNA(Leu) + H(+). Functions in the N-end rule pathway of protein degradation where it conjugates Leu from its aminoacyl-tRNA to the N-termini of proteins containing an N-terminal aspartate or glutamate. This chain is Aspartate/glutamate leucyltransferase, found in Hyphomonas neptunium (strain ATCC 15444).